A 288-amino-acid chain; its full sequence is Bifunctional protein FolD (288 aa).

NADP(+)-binding positions include 165–167 and Ser190; that span reads GRS.

The protein belongs to the tetrahydrofolate dehydrogenase/cyclohydrolase family. In terms of assembly, homodimer.

The catalysed reaction is (6R)-5,10-methylene-5,6,7,8-tetrahydrofolate + NADP(+) = (6R)-5,10-methenyltetrahydrofolate + NADPH. It carries out the reaction (6R)-5,10-methenyltetrahydrofolate + H2O = (6R)-10-formyltetrahydrofolate + H(+). It functions in the pathway one-carbon metabolism; tetrahydrofolate interconversion. Catalyzes the oxidation of 5,10-methylenetetrahydrofolate to 5,10-methenyltetrahydrofolate and then the hydrolysis of 5,10-methenyltetrahydrofolate to 10-formyltetrahydrofolate. This chain is Bifunctional protein FolD, found in Bdellovibrio bacteriovorus (strain ATCC 15356 / DSM 50701 / NCIMB 9529 / HD100).